Consider the following 331-residue polypeptide: Cytosolic 5'-nucleotidase 3A (331 aa).

Catalysis depends on Asp-83, which acts as the Nucleophile. 2 residues coordinate Mg(2+): Asp-83 and Asp-85. The active-site Proton donor is the Asp-85. Glu-130 provides a ligand contact to CMP. Residues Glu-130 and Ser-151 each coordinate N(7)-methyl-GMP. Substrate is bound by residues 198–200 and Lys-247; that span reads SAG. Asp-272 provides a ligand contact to Mg(2+). Residue Ser-273 is modified to Phosphoserine.

The protein belongs to the pyrimidine 5'-nucleotidase family. As to quaternary structure, monomer. As to expression, isoform 2 is highly expressed in the brain, heart, spleen, kidney and blood. Isoform 2 is expressed (at protein level) in the spleen, skeletal muscle and gastrointestinal epithelia.

It localises to the cytoplasm. The enzyme catalyses N(7)-methyl-GMP + H2O = N(7)-methylguanosine + phosphate. It carries out the reaction a ribonucleoside 5'-phosphate + H2O = a ribonucleoside + phosphate. Functionally, nucleotidase which shows specific activity towards cytidine monophosphate (CMP) and 7-methylguanosine monophosphate (m(7)GMP). CMP seems to be the preferred substrate. The polypeptide is Cytosolic 5'-nucleotidase 3A (Nt5c3a) (Mus musculus (Mouse)).